We begin with the raw amino-acid sequence, 100 residues long: Integration host factor subunit beta (100 aa).

The protein belongs to the bacterial histone-like protein family. As to quaternary structure, heterodimer of an alpha and a beta chain.

Its function is as follows. This protein is one of the two subunits of integration host factor, a specific DNA-binding protein that functions in genetic recombination as well as in transcriptional and translational control. This is Integration host factor subunit beta from Agrobacterium fabrum (strain C58 / ATCC 33970) (Agrobacterium tumefaciens (strain C58)).